The following is a 522-amino-acid chain: MPRKKAAAAAWEEPSSGNGTARAGPRKRGGPAGRKRERPERCSSSSGGGSSGDEDGLELDGAPGGGKRAARPATAGKAGGAAVVITEPEHTKERVKLEGSKCKGQLLIFGATNWDLIGRKEVPKQQAAYRNLGQNLWGPHRYGCLAGVRVRTVVSGSCAAHSLLITTEGKLWSWGRNEKGQLGHGDTKRVEAPRLIEGLSHEVIVSAACGRNHTLALTETGSVFAFGENKMGQLGLGNQTDAVPSPAQIMYNGQPITKMACGAEFSMIMDCKGNLYSFGCPEYGQLGHNSDGKFIARAQRIEYDCELVPRRVAIFIEKTKDGQILPVPNVVVRDVACGANHTLVLDSQKRVFSWGFGGYGRLGHAEQKDEMVPRLVKLFDFPGRGASQIYAGYTCSFAVSEVGGLFFWGATNTSRESTMYPKAVQDLCGWRIRSLACGKSSIIVAADESTISWGPSPTFGELGYGDHKPKSSTAAQEVKTLDGIFSEQVAMGYSHSLVIARDESETEKEKIKKLPEYNPRTL.

The interval 1–83 (MPRKKAAAAA…TAGKAGGAAV (83 aa)) is disordered. Ser16 is subject to Phosphoserine. At Thr20 the chain carries Phosphothreonine. Residues 24 to 36 (GPRKRGGPAGRKR) show a composition bias toward basic residues. 6 positions are modified to phosphoserine: Ser43, Ser44, Ser45, Ser46, Ser50, and Ser51. Low complexity predominate over residues 71-82 (RPATAGKAGGAA). N6-acetyllysine is present on residues Lys92 and Lys124. RCC1 repeat units lie at residues 103-165 (KGQL…SLLI), 168-219 (EGKL…ALTE), 221-271 (GSVF…IMDC), 273-347 (GNLY…VLDS), 348-401 (QKRV…AVSE), 403-447 (GGLF…VAAD), and 448-501 (ESTI…VIAR). Lys293 is subject to N6-acetyllysine. A required for interaction with RAC1 region spans residues 318-325 (KTKDGQIL). Thr342 is modified (phosphothreonine). Lys377 is subject to N6-acetyllysine. A compositionally biased stretch (basic and acidic residues) spans 502 to 515 (DESETEKEKIKKLP). Positions 502-522 (DESETEKEKIKKLPEYNPRTL) are disordered.

In terms of assembly, interacts with RAC1. Interacts with nucleotide-free and with GDP and GTP-bound forms of RAC1, with a slight preference for GDP-bound RAC1. Binds preferentially to the nucleotide-free form of RAC1. Interacts with CORO1C. Interacts with microtubules.

The protein resides in the nucleus. The protein localises to the nucleolus. It localises to the cytoplasm. It is found in the cytoskeleton. Its subcellular location is the chromosome. The protein resides in the centromere. The protein localises to the spindle. It localises to the midbody. It is found in the cell membrane. In terms of biological role, multifunctional protein that may affect its functions by regulating the activity of small GTPases, such as RAC1 and RALA. Required for normal progress through the cell cycle, both during interphase and during mitosis. Required for the presence of normal levels of MAD2L1, AURKB and BIRC5 on inner centromeres during mitosis, and for normal attachment of kinetochores to mitotic spindles. Required for normal organization of the microtubule cytoskeleton in interphase cells. Functions as guanine nucleotide exchange factor (GEF) for RALA. Interferes with the activation of RAC1 by guanine nucleotide exchange factors. Prevents accumulation of active, GTP-bound RAC1, and suppresses RAC1-mediated reorganization of the actin cytoskeleton and formation of membrane protrusions. Required for normal cellular responses to contacts with the extracellular matrix of adjacent cells, and for directional cell migration in response to a fibronectin gradient (in vitro). This chain is Protein RCC2 (RCC2), found in Homo sapiens (Human).